The sequence spans 584 residues: Acetylcholinesterase (584 aa).

Ala1 is a signal peptide. Cys70 and Cys97 form a disulfide bridge. The active-site Acyl-ester intermediate is the Ser204. Cys258 and Cys273 are disulfide-bonded. A glycan (N-linked (GlcNAc...) asparagine) is linked at Asn266. Catalysis depends on Glu335, which acts as the Charge relay system. Asn351 carries an N-linked (GlcNAc...) asparagine glycan. A disulfide bridge connects residues Cys410 and Cys530. Residue His448 is the Charge relay system of the active site. Asn465 carries an N-linked (GlcNAc...) asparagine glycan.

Belongs to the type-B carboxylesterase/lipase family. Homotetramer; composed of disulfide-linked homodimers. Interacts with PRIMA1. The interaction with PRIMA1 is required to anchor it to the basal lamina of cells and organize into tetramers.

It is found in the synapse. Its subcellular location is the secreted. It localises to the cell membrane. It carries out the reaction acetylcholine + H2O = choline + acetate + H(+). Its function is as follows. Terminates signal transduction at the neuromuscular junction by rapid hydrolysis of the acetylcholine released into the synaptic cleft. The protein is Acetylcholinesterase (ACHE) of Oryctolagus cuniculus (Rabbit).